The chain runs to 231 residues: NADH-ubiquinone oxidoreductase chain 4 (231 aa).

The next 7 helical transmembrane spans lie at 1–21 (PIAGSMVLAAILLKLGGYGII), 34–54 (MFLPFIVLALWGAILANLTCL), 63–85 (IAYSSISHMGLVVAAIIIQTPWG), 89–111 (AMALMIAHGFTSSALFCLANTTY), 128–148 (ILPMATTWWLLTNLMNIAIPP), 156–176 (LLIMSALFNWCPTTIIMLGLS), and 211–231 (LLMILHLIPLMMISMKPELII).

The protein belongs to the complex I subunit 4 family.

It is found in the mitochondrion membrane. The catalysed reaction is a ubiquinone + NADH + 5 H(+)(in) = a ubiquinol + NAD(+) + 4 H(+)(out). In terms of biological role, core subunit of the mitochondrial membrane respiratory chain NADH dehydrogenase (Complex I) that is believed to belong to the minimal assembly required for catalysis. Complex I functions in the transfer of electrons from NADH to the respiratory chain. The immediate electron acceptor for the enzyme is believed to be ubiquinone. This chain is NADH-ubiquinone oxidoreductase chain 4 (MT-ND4), found in Agkistrodon piscivorus piscivorus (Eastern cottonmouth).